A 394-amino-acid chain; its full sequence is Phosphoglycerate kinase (394 aa).

Substrate is bound by residues Asp21–Asn23, Arg36, His60–Asn63, Arg114, and Arg147. ATP is bound by residues Lys198, Glu315, and Gly341 to Thr344.

It belongs to the phosphoglycerate kinase family. In terms of assembly, monomer.

It is found in the cytoplasm. It catalyses the reaction (2R)-3-phosphoglycerate + ATP = (2R)-3-phospho-glyceroyl phosphate + ADP. It functions in the pathway carbohydrate degradation; glycolysis; pyruvate from D-glyceraldehyde 3-phosphate: step 2/5. The sequence is that of Phosphoglycerate kinase from Wigglesworthia glossinidia brevipalpis.